A 138-amino-acid polypeptide reads, in one-letter code: Photosystem II extrinsic protein U (138 aa).

Residues 1–28 form the signal peptide; it reads MSRVVSALMGLVLMFGCAFFSVQPQAQA. The propeptide occupies 29 to 42; sequence LDLSNGFVSAAVLG.

Belongs to the PsbU family. In terms of assembly, PSII is composed of 1 copy each of membrane proteins PsbA, PsbB, PsbC, PsbD, PsbE, PsbF, PsbH, PsbI, PsbJ, PsbK, PsbL, PsbM, PsbT, PsbX, PsbY, PsbZ, Psb30/Ycf12, peripheral proteins PsbO, CyanoQ (PsbQ), PsbU, PsbV and a large number of cofactors. It forms dimeric complexes.

The protein resides in the cellular thylakoid membrane. Functionally, one of the extrinsic, lumenal subunits of photosystem II (PSII). PSII is a light-driven water plastoquinone oxidoreductase, using light energy to abstract electrons from H(2)O, generating a proton gradient subsequently used for ATP formation. The extrinsic proteins stabilize the structure of photosystem II oxygen-evolving complex (OEC), the ion environment of oxygen evolution and protect the OEC against heat-induced inactivation. The polypeptide is Photosystem II extrinsic protein U (Picosynechococcus sp. (strain ATCC 27264 / PCC 7002 / PR-6) (Agmenellum quadruplicatum)).